Consider the following 298-residue polypeptide: uncharacterized protein (298 aa).

Residues 264–298 (APPPPLPCITTGPAALEDSPKASKANKGKKAKAKK) form a disordered region. Positions 287–298 (KANKGKKAKAKK) are enriched in basic residues.

This is an uncharacterized protein from Mus musculus (Mouse).